The chain runs to 465 residues: Chromosomal replication initiator protein DnaA (465 aa).

The domain I, interacts with DnaA modulators stretch occupies residues 1–87 (MLWTDCLTRL…RPGSILSSSE (87 aa)). A disordered region spans residues 81 to 123 (SILSSSEQPATTTAALQTAPIPQPAKVKREPEPVANTAVSSKS). A compositionally biased stretch (low complexity) spans 88–100 (QPATTTAALQTAP). The segment at 88-127 (QPATTTAALQTAPIPQPAKVKREPEPVANTAVSSKSSKKK) is domain II. Residues 128 to 345 (LLNPQFTFSL…GALNKVVAIS (218 aa)) form a domain III, AAA+ region region. The ATP site is built by glycine 173, glycine 175, lysine 176, and threonine 177. Residues 346 to 465 (RFKGAPIDLD…YKNLLRLLQS (120 aa)) are domain IV, binds dsDNA.

It belongs to the DnaA family. As to quaternary structure, oligomerizes as a right-handed, spiral filament on DNA at oriC.

It localises to the cytoplasm. Its function is as follows. Plays an essential role in the initiation and regulation of chromosomal replication. ATP-DnaA binds to the origin of replication (oriC) to initiate formation of the DNA replication initiation complex once per cell cycle. Binds the DnaA box (a 9 base pair repeat at the origin) and separates the double-stranded (ds)DNA. Forms a right-handed helical filament on oriC DNA; dsDNA binds to the exterior of the filament while single-stranded (ss)DNA is stabiized in the filament's interior. The ATP-DnaA-oriC complex binds and stabilizes one strand of the AT-rich DNA unwinding element (DUE), permitting loading of DNA polymerase. After initiation quickly degrades to an ADP-DnaA complex that is not apt for DNA replication. Binds acidic phospholipids. The polypeptide is Chromosomal replication initiator protein DnaA (Acinetobacter baumannii (strain ATCC 17978 / DSM 105126 / CIP 53.77 / LMG 1025 / NCDC KC755 / 5377)).